The following is a 172-amino-acid chain: MQNITDGSFGFDTDILATNLINLSAVLGVLIFFGKGVLSDLLDNRKQRILRTIRNSEELRETAIEQLEKARARLRKVEMEADRFRVNGYAEIEREKLNLINSIYTSLEQFENDKNKTIHFEQQRAINQVQQSVLQQALQGALGTLNSCLNNELHLRTIGATIGMFGSMKAKK.

The helical transmembrane segment at 15–37 threads the bilayer; it reads ILATNLINLSAVLGVLIFFGKGV.

Belongs to the ATPase B chain family. F-type ATPases have 2 components, F(1) - the catalytic core - and F(0) - the membrane proton channel. F(1) has five subunits: alpha(3), beta(3), gamma(1), delta(1), epsilon(1). F(0) has four main subunits: a(1), b(1), b'(1) and c(10-14). The alpha and beta chains form an alternating ring which encloses part of the gamma chain. F(1) is attached to F(0) by a central stalk formed by the gamma and epsilon chains, while a peripheral stalk is formed by the delta, b and b' chains.

Its subcellular location is the plastid. The protein localises to the chloroplast thylakoid membrane. F(1)F(0) ATP synthase produces ATP from ADP in the presence of a proton or sodium gradient. F-type ATPases consist of two structural domains, F(1) containing the extramembraneous catalytic core and F(0) containing the membrane proton channel, linked together by a central stalk and a peripheral stalk. During catalysis, ATP synthesis in the catalytic domain of F(1) is coupled via a rotary mechanism of the central stalk subunits to proton translocation. Its function is as follows. Component of the F(0) channel, it forms part of the peripheral stalk, linking F(1) to F(0). In Pisum sativum (Garden pea), this protein is ATP synthase subunit b, chloroplastic.